Consider the following 303-residue polypeptide: Putative 1-phosphofructokinase (303 aa).

Residues 217–222 (SDGDKG) and 249–250 (GD) each bind ATP. Residue Asp250 is the Proton acceptor of the active site.

It belongs to the carbohydrate kinase PfkB family.

It carries out the reaction beta-D-fructose 1-phosphate + ATP = beta-D-fructose 1,6-bisphosphate + ADP + H(+). Catalyzes the ATP-dependent phosphorylation of fructose-l-phosphate to fructose-l,6-bisphosphate. The protein is Putative 1-phosphofructokinase (fruK) of Mycoplasma genitalium (strain ATCC 33530 / DSM 19775 / NCTC 10195 / G37) (Mycoplasmoides genitalium).